Consider the following 240-residue polypeptide: Fibronectin type III domain-containing protein 5 (240 aa).

Positions 1–10 (MQAARGGAGR) are enriched in gly residues. A disordered region spans residues 1–33 (MQAARGGAGRPGREGRGLERECERSPGPGVAMP). A compositionally biased stretch (basic and acidic residues) spans 11–24 (PGREGRGLERECER). The Fibronectin type-III domain maps to 64–155 (APVNVTVRHL…EPVLFKTPRE (92 aa)). N-linked (GlcNAc...) asparagine glycosylation is found at Asn-67 and Asn-112. A helical membrane pass occupies residues 181–201 (GEVLIIVVVLFMWAGVIALFC). The segment covering 210-221 (NEPNNNKEKTKS) has biased composition (basic and acidic residues). A disordered region spans residues 210 to 240 (NEPNNNKEKTKSASETSTPEHQGGGLLRSKI). Positions 231-240 (QGGGLLRSKI) are enriched in gly residues. Positions 238–240 (SKI) match the Microbody targeting signal motif.

As to quaternary structure, dimer; may exist in other oligomeric forms. The extracellular domain is cleaved and released from the cell membrane. In terms of processing, N-Glycosylated. In adult, it is highly expressed in skeletal muscle, heart and brain.

The protein resides in the cell membrane. Its subcellular location is the peroxisome membrane. It is found in the secreted. Functionally, mediates beneficial effects of muscular exercise. Induces browning of white adipose tissue by stimulating UCP1 expression, at least in part, via the nuclear receptor PPARA. In Mus musculus (Mouse), this protein is Fibronectin type III domain-containing protein 5 (Fndc5).